Reading from the N-terminus, the 45-residue chain is Bomanin Short 1 (45 aa).

The signal sequence occupies residues 1–20 (MKFFSVVTVFVLGLLAVANA). The propeptide at 21–27 (VPLSPDP) is removed by a dipeptidylpeptidase. Cys36 and Cys39 are disulfide-bonded. Gly43 is subject to Glycine amide.

In terms of tissue distribution, hemolymph (at protein level).

It is found in the secreted. Secreted immune-induced peptide induced by Toll signaling. Has a role in resistance to bacterial and fungal infections. Has no activity against the fungus C.glabrata in vitro. The polypeptide is Bomanin Short 1 (Drosophila melanogaster (Fruit fly)).